Consider the following 442-residue polypeptide: Cyclin-A1-2 (442 aa).

Composition is skewed to polar residues over residues 1 to 12 (MSSSSRNLSQEN) and 39 to 63 (ITNQKNGSRNPSPSSTLVNCSNKIG). The disordered stretch occupies residues 1-72 (MSSSSRNLSQ…GQSKKAPKPA (72 aa)).

The protein belongs to the cyclin family. Cyclin AB subfamily. In terms of assembly, interacts with CDC20-1, CDC20-2, FZR2/CCS52A1 and FZR1/CCS52A2. Expressed in roots, stems and flowers.

The protein resides in the cytoplasm. It is found in the nucleus. Involved in the regulation of male meiosis progression. The polypeptide is Cyclin-A1-2 (CYCA1-2) (Arabidopsis thaliana (Mouse-ear cress)).